The sequence spans 187 residues: ATP-dependent protease subunit HslV (187 aa).

The active site involves Thr-7. The Na(+) site is built by Ala-162, Cys-165, and Thr-168.

This sequence belongs to the peptidase T1B family. HslV subfamily. As to quaternary structure, a double ring-shaped homohexamer of HslV is capped on each side by a ring-shaped HslU homohexamer. The assembly of the HslU/HslV complex is dependent on binding of ATP.

It localises to the cytoplasm. The catalysed reaction is ATP-dependent cleavage of peptide bonds with broad specificity.. Allosterically activated by HslU binding. In terms of biological role, protease subunit of a proteasome-like degradation complex believed to be a general protein degrading machinery. The protein is ATP-dependent protease subunit HslV of Methylococcus capsulatus (strain ATCC 33009 / NCIMB 11132 / Bath).